The chain runs to 464 residues: Asparagine--tRNA ligase (464 aa).

This sequence belongs to the class-II aminoacyl-tRNA synthetase family. Homodimer.

It localises to the cytoplasm. It carries out the reaction tRNA(Asn) + L-asparagine + ATP = L-asparaginyl-tRNA(Asn) + AMP + diphosphate + H(+). The sequence is that of Asparagine--tRNA ligase from Azobacteroides pseudotrichonymphae genomovar. CFP2.